The sequence spans 774 residues: Multiple C2 domain and transmembrane region protein 11 (774 aa).

Over residues 1 to 12 (MAVNGTGNGTGD) the composition is skewed to gly residues. The interval 1–30 (MAVNGTGNGTGDGDFSLKETSPNIGNGGVN) is disordered. C2 domains are found at residues 9–145 (GTGD…PQWY), 184–307 (VTGE…SLWY), and 338–471 (LDES…THSY). D62, N110, D112, and D118 together coordinate Ca(2+). Helical transmembrane passes span 608 to 628 (LFVV…CFVF) and 722 to 742 (FVSC…FLAF).

This sequence belongs to the MCTP family. Requires Ca(2+) as cofactor. In terms of tissue distribution, observed in flowers.

It localises to the endoplasmic reticulum membrane. May function as a signaling molecule by regulating the trafficking of other regulators. The protein is Multiple C2 domain and transmembrane region protein 11 of Arabidopsis thaliana (Mouse-ear cress).